The following is a 706-amino-acid chain: Lysophospholipase 2 (706 aa).

The first 19 residues, 1 to 19 (MQLRNILQASSLISGLSLA), serve as a signal peptide directing secretion. In terms of domain architecture, PLA2c spans 36-588 (PCPSDDTSLV…ADYCWNGTLS (553 aa)). N47, N80, N94, N125, N162, N181, N193, N217, N279, N309, N365, N390, N491, N515, N524, N543, N567, N584, N598, N630, N634, N642, N648, N652, and N658 each carry an N-linked (GlcNAc...) asparagine glycan. The disordered stretch occupies residues 627-672 (TSGNTTSNSTTSTSSNVTSNSNSSSNTTLNSNSSSSSISSSTARSS). A lipid anchor (GPI-anchor amidated asparagine) is attached at N680. The propeptide at 681–706 (AAAISYANTNTLMSLLGAITALFGLI) is removed in mature form.

This sequence belongs to the lysophospholipase family. Post-translationally, the GPI-anchor is attached to the protein in the endoplasmic reticulum and serves to target the protein to the cell surface. There, the glucosamine-inositol phospholipid moiety is cleaved off and the GPI-modified mannoprotein is covalently attached via its lipidless GPI glycan remnant to the 1,6-beta-glucan of the outer cell wall layer.

Its subcellular location is the secreted. It is found in the cell wall. The protein localises to the membrane. The enzyme catalyses a 1-acyl-sn-glycero-3-phosphocholine + H2O = sn-glycerol 3-phosphocholine + a fatty acid + H(+). It catalyses the reaction 1-hexadecanoyl-sn-glycero-3-phosphoethanolamine + H2O = sn-glycero-3-phosphoethanolamine + hexadecanoate + H(+). It carries out the reaction 1-hexadecanoyl-sn-glycero-3-phosphocholine + H2O = sn-glycerol 3-phosphocholine + hexadecanoate + H(+). The catalysed reaction is 1-hexadecanoyl-sn-glycero-3-phospho-L-serine + H2O = sn-glycero-3-phospho-L-serine + hexadecanoate + H(+). The enzyme catalyses 1,2-dihexadecanoyl-sn-glycero-3-phosphocholine + H2O = 1-hexadecanoyl-sn-glycero-3-phosphocholine + hexadecanoate + H(+). In terms of biological role, sequentially removes both fatty acyl groups from diacylglycerophospholipids and therefore has both phospholipase A and lysophospholipase activities. However, it does not display transacylase activity. Substrate preference is phosphatidylserine &gt; phosphatidylinositol &gt; phosphatidylcholine &gt; phosphatidylethanolamine. The substrate specificity is pH- and ion-dependent. In contrast with activities observed at optimum pH 3.5, the order of substrate preference at pH 5.5 is phosphatidylserine = phosphatidylethanolamine &gt; phosphatidylcholine &gt; phosphatidylinositol. The protein is Lysophospholipase 2 (PLB2) of Saccharomyces cerevisiae (strain ATCC 204508 / S288c) (Baker's yeast).